We begin with the raw amino-acid sequence, 142 residues long: Large ribosomal subunit protein uL11 (142 aa).

It belongs to the universal ribosomal protein uL11 family. As to quaternary structure, part of the ribosomal stalk of the 50S ribosomal subunit. Interacts with L10 and the large rRNA to form the base of the stalk. L10 forms an elongated spine to which L12 dimers bind in a sequential fashion forming a multimeric L10(L12)X complex. Post-translationally, one or more lysine residues are methylated.

Forms part of the ribosomal stalk which helps the ribosome interact with GTP-bound translation factors. This is Large ribosomal subunit protein uL11 from Mesoplasma florum (strain ATCC 33453 / NBRC 100688 / NCTC 11704 / L1) (Acholeplasma florum).